The primary structure comprises 699 residues: Elongation factor G 1 (699 aa).

Positions 8–290 constitute a tr-type G domain; it reads EHYRNIGICA…AVIEFLPSPS (283 aa). GTP is bound by residues 17 to 24, 88 to 92, and 142 to 145; these read AHVDAGKT, DTPGH, and NKMD.

The protein belongs to the TRAFAC class translation factor GTPase superfamily. Classic translation factor GTPase family. EF-G/EF-2 subfamily.

Its subcellular location is the cytoplasm. Functionally, catalyzes the GTP-dependent ribosomal translocation step during translation elongation. During this step, the ribosome changes from the pre-translocational (PRE) to the post-translocational (POST) state as the newly formed A-site-bound peptidyl-tRNA and P-site-bound deacylated tRNA move to the P and E sites, respectively. Catalyzes the coordinated movement of the two tRNA molecules, the mRNA and conformational changes in the ribosome. In Vibrio parahaemolyticus serotype O3:K6 (strain RIMD 2210633), this protein is Elongation factor G 1.